The primary structure comprises 374 residues: MSKGIVLLAAGGTGGHVFPAEALAFKLKERGYSVHLVTDSRAERFAGKFPAEEIHVVPSATIGSKNPVAVARSLWTLWSGMRAAKKLIQRLKPVIVVGFGGYPTVPPLLAATRLGIASMLHEQNAVMGRANKALAPRVKAIAGGFLQESGDVFSDKTVATGNPVRPAILAAAEQPYHPSHPGEPFNLVVFGGSQGAQYFSKAMPTAISLLDDELRARLRVTQQVRPEDMEMVRGCVAQLQMGADIAPFFNDMAERLAKAHLVICRSGASTVSEISVIGRPAVLVPYPHALDHDQAANAAALAATGGAKVIVQSELSPERIASILSHVMNDPEKLSHMAAAAKLAGKPDAANLLADMVEAIAAGKTVSEFKRTRA.

Residues 13-15 (TGG), Asn-124, Arg-165, Ser-193, and Gln-294 contribute to the UDP-N-acetyl-alpha-D-glucosamine site.

It belongs to the glycosyltransferase 28 family. MurG subfamily.

It localises to the cell inner membrane. The enzyme catalyses di-trans,octa-cis-undecaprenyl diphospho-N-acetyl-alpha-D-muramoyl-L-alanyl-D-glutamyl-meso-2,6-diaminopimeloyl-D-alanyl-D-alanine + UDP-N-acetyl-alpha-D-glucosamine = di-trans,octa-cis-undecaprenyl diphospho-[N-acetyl-alpha-D-glucosaminyl-(1-&gt;4)]-N-acetyl-alpha-D-muramoyl-L-alanyl-D-glutamyl-meso-2,6-diaminopimeloyl-D-alanyl-D-alanine + UDP + H(+). It functions in the pathway cell wall biogenesis; peptidoglycan biosynthesis. Functionally, cell wall formation. Catalyzes the transfer of a GlcNAc subunit on undecaprenyl-pyrophosphoryl-MurNAc-pentapeptide (lipid intermediate I) to form undecaprenyl-pyrophosphoryl-MurNAc-(pentapeptide)GlcNAc (lipid intermediate II). The sequence is that of UDP-N-acetylglucosamine--N-acetylmuramyl-(pentapeptide) pyrophosphoryl-undecaprenol N-acetylglucosamine transferase from Rhizobium etli (strain CIAT 652).